The chain runs to 177 residues: 2''-aminoglycoside nucleotidyltransferase (177 aa).

Mg(2+) is bound by residues aspartate 44, aspartate 46, and aspartate 86. The Proton acceptor role is filled by aspartate 86.

Mg(2+) is required as a cofactor.

The catalysed reaction is nucleoside triphosphate + gentamicin = diphosphate + 2''-nucleotidylgentamicin.. Functionally, mediates bacterial resistance to kanamycin, gentamicin, dibekacin, sisomicin, neomycin and tobramycin by adenylating the 2''-hydroxyl group of these antibiotics. The sequence is that of 2''-aminoglycoside nucleotidyltransferase (aadB) from Klebsiella pneumoniae.